Here is a 2705-residue protein sequence, read N- to C-terminus: Teneurin-1 (2705 aa).

Disordered regions lie at residues 1 to 73 and 135 to 222; these read MEQM…STQD and CLSS…TQDS. One can recognise a Teneurin N-terminal domain in the interval 1–299; sequence MEQMDCKPYQ…KPYRCCNWKC (299 aa). Residues 1 to 305 lie on the Cytoplasmic side of the membrane; it reads MEQMDCKPYQ…NWKCTALSAT (305 aa). The span at 32-46 shows a compositional bias: basic and acidic residues; the sequence is DGRKQRQSYDSRETL. Residues 62–65 carry the Nuclear localization signal (NLS) motif; that stretch reads RKRK. Residues 135–147 are compositionally biased toward polar residues; sequence CLSSRANSALSLT. Residues 148-157 are compositionally biased toward basic and acidic residues; it reads DTDHERKSDG. Residues 173–182 are compositionally biased toward pro residues; the sequence is PLPPPPPPPH. The Required for interaction with SORBS1 (Ten-1 ICD form) motif lies at 271–278; the sequence is PPPRPLPR. A helical membrane pass occupies residues 306–326; it reads AITVTLALLLAYVIAVHLFGL. The Extracellular segment spans residues 327-2705; it reads TWQLQPVEGQ…FMRQSEIGRR (2379 aa). N-linked (GlcNAc...) asparagine glycosylation occurs at N414. 8 consecutive EGF-like domains span residues 509-540, 541-572, 573-605, 606-638, 639-672, 673-702, 703-734, and 735-769; these read VLDD…PDCA, KDSC…ECDV, PEEQ…EICE, EEDC…NCET, SLPI…SDCS, TELC…GPTC, EERT…DHCT, and IDGC…SGCN. 22 disulfides stabilise this stretch: C513–C523, C517–C528, C530–C539, C548–C559, C561–C570, C577–C588, C582–C593, C595–C604, C609–C620, C614–C625, C627–C636, C647–C660, C662–C671, C676–C686, C680–C691, C693–C702, C707–C717, C711–C722, C724–C733, C738–C748, C742–C757, and C759–C768. Residues N878 and N1057 are each glycosylated (N-linked (GlcNAc...) asparagine). 5 NHL repeats span residues 1167 to 1192, 1202 to 1246, 1272 to 1316, 1331 to 1382, and 1461 to 1504; these read LFAP…VRRI, LELR…AKSL, SHCG…NGMI, LSCD…IAGR, and CFSG…VSRN. The YD 1 repeat unit spans residues 1514 to 1533; it reads YEIASPADQELYQFTINGTH. N1530 and N1547 each carry an N-linked (GlcNAc...) asparagine glycan. YD repeat units follow at residues 1550–1570, 1588–1612, 1613–1634, and 1635–1655; these read YSGE…VHIR, YWLT…ALMT, YPGN…TVYE, and YDSD…SSFH. Residues N1643, N1679, N1737, N1761, and N1822 are each glycosylated (N-linked (GlcNAc...) asparagine). 11 YD repeats span residues 1825-1844, 1845-1865, 1866-1884, 1885-1905, 1913-1929, 1930-1949, 1950-1969, 1972-1992, 1995-2015, 2065-2085, and 2093-2113; these read YSHS…EKME, YDPS…WSYT, YLEK…YIFE, YDQS…HALQ, YRNI…FIQD, VTRD…RRVL, YKYS…TQVT, YEES…FICT, YRQT…EGLV, YDLN…FSAN, and YEIL…MGRM. N-linked (GlcNAc...) asparagine glycosylation occurs at N2125. YD repeat units lie at residues 2133-2153, 2154-2174, 2176-2196, 2208-2228, and 2230-2250; these read YDRD…WRYS, YDLN…LTPL, YDLR…DEDG, YNSN…TVQY, and YDGL…LQFF. Residue N2265 is glycosylated (N-linked (GlcNAc...) asparagine). YD repeat units follow at residues 2276-2293 and 2294-2317; these read YDLQ…GEEY and YVAC…IKEI. N-linked (GlcNAc...) asparagine glycosylation is present at N2582.

Belongs to the tenascin family. Teneurin subfamily. Homodimer; disulfide-linked. Heterodimer with other teneurins. Ten-1 ICD interacts with SORBS1 (via third SH3 domain). Interacts with MBD1 isoform 2. Post-translationally, derives from the plasma membrane form by proteolytic processing. Further proteolytic cleavage may be generated. In terms of processing, derives from the plasma membrane form by proteolytic cleavage and translocates to the nucleus. In terms of tissue distribution, expressed in the neurons of the developing visual system and in fetal brain.

The protein localises to the cell membrane. Its subcellular location is the nucleus. It is found in the nucleus speckle. It localises to the nucleus matrix. The protein resides in the cytoplasm. The protein localises to the cytoskeleton. In terms of biological role, involved in neural development, regulating the establishment of proper connectivity within the nervous system. May function as a cellular signal transducer. Its function is as follows. Plays a role in the regulation of neuroplasticity in the limbic system. Mediates a rapid reorganization of actin- and tubulin-based cytoskeleton elements with an increase in dendritic arborization and spine density formation of neurons in the hippocampus and amygdala. Induces BDNF transcription inhibition in neurons. Activates the mitogen-activated protein (MAP) kinase 2 (MEK2) and extracellular signal-regulated kinase (ERK) cascade. Induces gene transcription activation. This chain is Teneurin-1 (TENM1), found in Gallus gallus (Chicken).